Reading from the N-terminus, the 555-residue chain is Inositol 1,4,5-trisphosphate receptor-interacting protein-like 1 (555 aa).

Positions 1–24 (MNVDAEASMAVISLLFLAVMYVVH) are cleaved as a signal peptide. Residues 25–103 (HPLMVSDRMD…WPFQADGQEG (79 aa)) lie on the Extracellular side of the membrane. Positions 38–74 (LARSRQLEKRMSEEMRLLEMEFEERKRAAEQRQKAEN) form a coiled coil. Residues 104-124 (PLGWMLGNLWNTGLFCLFLVF) traverse the membrane as a helical segment. The Cytoplasmic segment spans residues 125-555 (ELLRQNMQHE…LPHAPLAAAP (431 aa)).

Belongs to the ITPRIP family. As to expression, expressed in testis and tumoral cells.

The protein localises to the cell membrane. Functions as a ligand of CD3E, inhibiting TCR-CD3 complex signaling to regulate T cell activation. Induces stable CD3E-NCK1 binding, thereby preventing the CD3E-ZAP70 interaction and subsequently inhibiting the activation of the downstream ERK-NFkB signaling cascade and calcium influx. The protein is Inositol 1,4,5-trisphosphate receptor-interacting protein-like 1 of Homo sapiens (Human).